The sequence spans 658 residues: CXXC-type zinc finger protein 1 (658 aa).

An N-acetylmethionine modification is found at M1. The segment covering 1–14 has biased composition (acidic residues); that stretch reads MEGDASDPEPPDAG. The disordered stretch occupies residues 1-20; the sequence is MEGDASDPEPPDAGEDSKSE. S6 and S19 each carry phosphoserine. The PHD-type zinc finger occupies 28-76; it reads YCICRKPDINCFMIGCDNCNEWFHGDCIRITEKMAKAIREWYCRECREK. A disordered region spans residues 84–164; that stretch reads YRHKKSRERD…HQQQQQQQQI (81 aa). Positions 90–120 are enriched in basic and acidic residues; that stretch reads RERDSSERDGSEPRDEGGGRKRPAPDPDLQR. A compositionally biased stretch (low complexity) spans 153-163; the sequence is QHHQQQQQQQQ. Residues 162 to 211 form a CXXC-type zinc finger; it reads QQIKRSARMCGECEACRRTEDCGHCDFCRDMKKFGGPNKIRQKCRLRQCQ. Zn(2+) contacts are provided by C171, C174, C177, C183, C186, C189, C205, and C210. 2 disordered regions span residues 221-285 and 327-373; these read FPSS…SDED and VKVK…DPAS. Phosphoserine is present on S226. At T229 the chain carries Phosphothreonine. K252 participates in a covalent cross-link: Glycyl lysine isopeptide (Lys-Gly) (interchain with G-Cter in SUMO2). Residues 327–336 show a composition bias toward basic residues; it reads VKVKHVKRRE. Residues 337–347 show a composition bias toward basic and acidic residues; sequence KKSEKKKDERY. Residues 348–360 are compositionally biased toward basic residues; that stretch reads KRHRQKQKHKDKW. Positions 361–370 are enriched in basic and acidic residues; that stretch reads KHPERADAKD. Positions 428–470 form a coiled coil; that stretch reads GKKLLERIRREQQSARTRLQEMERRFHELEAIILRAKQQAVRE.

Component of the SET1 complex, at least composed of the catalytic subunit (SETD1A or SETD1B), WDR5, WDR82, RBBP5, ASH2L/ASH2, CXXC1/CFP1, HCFC1 and DPY30. Interacts with SETD1A. Interacts with ZNF335. Interacts with PRDM9; this interaction does not link PRDM9-activated recombination hotspot sites with DSB machinery and is not required for the hotspot recognition pathway. Interacts with histone H3K4me3. In terms of processing, may be regulated by proteolysis.

The protein resides in the nucleus speckle. It localises to the nucleus. In terms of biological role, transcriptional activator that exhibits a unique DNA binding specificity for CpG unmethylated motifs with a preference for CpGG. The protein is CXXC-type zinc finger protein 1 (CXXC1) of Bos taurus (Bovine).